Reading from the N-terminus, the 221-residue chain is uncharacterized protein (221 aa).

This is an uncharacterized protein from Escherichia coli (strain K12).